A 123-amino-acid polypeptide reads, in one-letter code: Small ribosomal subunit protein uS12 (123 aa).

Positions 1–30 (MPTIQQLIRKPRQPKIKRSKSQHMEGCPQK) are disordered. The span at 9–21 (RKPRQPKIKRSKS) shows a compositional bias: basic residues. 3-methylthioaspartic acid is present on aspartate 89. The tract at residues 104–123 (TQGVKDRRQRRSKYGAKRPK) is disordered. The segment covering 110-123 (RRQRRSKYGAKRPK) has biased composition (basic residues).

The protein belongs to the universal ribosomal protein uS12 family. Part of the 30S ribosomal subunit. Contacts proteins S8 and S17. May interact with IF1 in the 30S initiation complex.

With S4 and S5 plays an important role in translational accuracy. Functionally, interacts with and stabilizes bases of the 16S rRNA that are involved in tRNA selection in the A site and with the mRNA backbone. Located at the interface of the 30S and 50S subunits, it traverses the body of the 30S subunit contacting proteins on the other side and probably holding the rRNA structure together. The combined cluster of proteins S8, S12 and S17 appears to hold together the shoulder and platform of the 30S subunit. In Jannaschia sp. (strain CCS1), this protein is Small ribosomal subunit protein uS12.